The chain runs to 809 residues: Cell division control protein 48 homolog A (809 aa).

Serine 2 is subject to N-acetylserine. A Phosphoserine modification is found at serine 41. Residues glycine 210, 248–256, and histidine 387 each bind ADP; that span reads GPPGSGKTL. 521–529 contributes to the ATP binding site; that stretch reads GPPGCGKTL. A disordered region spans residues 782 to 809; sequence AGSGATTGVADPFATSAAAAGDDDDLYN. Low complexity predominate over residues 791–801; the sequence is ADPFATSAAAA.

It belongs to the AAA ATPase family. In terms of assembly, homohexamer. Interacts with SERK1, GRF6, KAPP and SYP31, but not with KNOLLE. Component of the SERK1 signaling complex, composed of KAPP, CDC48A, GRF6 or GRF7, SERK1, SERK2, SERK3/BAK1 and BRI1. Interacts with PUX1, PUX2, PUX3, PUX4, PUX5, PUX7 and PUX11 via its N-terminus. In terms of processing, phosphorylated on at least one threonine residue and on Ser-41 by SERK1.

Its subcellular location is the nucleus. The protein localises to the cytoplasm. It is found in the cytoskeleton. The protein resides in the phragmoplast. It localises to the cell membrane. Probably functions in cell division and growth processes. Interacts with certain SNAREs as part of specialized membrane fusion events where vesicles from the same organelle fuse (homotypic fusion). The polypeptide is Cell division control protein 48 homolog A (CDC48A) (Arabidopsis thaliana (Mouse-ear cress)).